We begin with the raw amino-acid sequence, 97 residues long: MASYHVSHDSYQSPGPSPLYQPIIEAPPPPYPPTRTRYQDYYGGYGQPHPPPLRPYRSDHEYYGDGEYVGCFPFLRSCLTTLCCCWFVEQCCFRSRY.

The disordered stretch occupies residues 1–27 (MASYHVSHDSYQSPGPSPLYQPIIEAP). The span at 15 to 27 (GPSPLYQPIIEAP) shows a compositional bias: pro residues. The helical transmembrane segment at 68–88 (YVGCFPFLRSCLTTLCCCWFV) threads the bilayer.

The protein belongs to the CYSTM1 family. In terms of assembly, homodimer and heterodimers. Interacts with CYSTM3, CYSTM4, CYSTM5, CYSTM6, CYSTM10, WIH1/CYSTM13 and CYSTM11. Binds weakly to CYSTM1, CYSTM2 and CYSTM12. In terms of tissue distribution, mostly expressed in siliques and, to a lower extent, in stems, roots, leaves and flowers.

The protein resides in the cell membrane. Functionally, involved in resistance to abiotic stress. The sequence is that of Protein CYSTEINE-RICH TRANSMEMBRANE MODULE 7 from Arabidopsis thaliana (Mouse-ear cress).